The primary structure comprises 214 residues: UPF0301 protein NFA_55110 (214 aa).

The segment at 1–24 is disordered; it reads MARADDPDERKTQGGHGDRRRREF.

This sequence belongs to the UPF0301 (AlgH) family.

In Nocardia farcinica (strain IFM 10152), this protein is UPF0301 protein NFA_55110.